Reading from the N-terminus, the 279-residue chain is Formamidopyrimidine-DNA glycosylase (279 aa).

The active-site Schiff-base intermediate with DNA is the proline 2. The active-site Proton donor is the glutamate 3. Lysine 57 functions as the Proton donor; for beta-elimination activity in the catalytic mechanism. DNA contacts are provided by histidine 90, arginine 109, and arginine 151. The segment at 236-270 (FVYGRTGQPCRVCQTPIAVLRLGQRSTFYCPACQQ) adopts an FPG-type zinc-finger fold. Catalysis depends on arginine 260, which acts as the Proton donor; for delta-elimination activity.

This sequence belongs to the FPG family. Monomer. Zn(2+) is required as a cofactor.

The enzyme catalyses Hydrolysis of DNA containing ring-opened 7-methylguanine residues, releasing 2,6-diamino-4-hydroxy-5-(N-methyl)formamidopyrimidine.. The catalysed reaction is 2'-deoxyribonucleotide-(2'-deoxyribose 5'-phosphate)-2'-deoxyribonucleotide-DNA = a 3'-end 2'-deoxyribonucleotide-(2,3-dehydro-2,3-deoxyribose 5'-phosphate)-DNA + a 5'-end 5'-phospho-2'-deoxyribonucleoside-DNA + H(+). Involved in base excision repair of DNA damaged by oxidation or by mutagenic agents. Acts as a DNA glycosylase that recognizes and removes damaged bases. Has a preference for oxidized purines, such as 7,8-dihydro-8-oxoguanine (8-oxoG). Has AP (apurinic/apyrimidinic) lyase activity and introduces nicks in the DNA strand. Cleaves the DNA backbone by beta-delta elimination to generate a single-strand break at the site of the removed base with both 3'- and 5'-phosphates. This chain is Formamidopyrimidine-DNA glycosylase, found in Methylobacillus flagellatus (strain ATCC 51484 / DSM 6875 / VKM B-1610 / KT).